The following is a 653-amino-acid chain: Zinc finger CCCH domain-containing protein 54 (653 aa).

The tract at residues 242–261 (NGGGGGGGSPARARRSNGLS) is disordered. The segment at 260–287 (LSTRRPCHYFSKGICKNGQNCHYSHHQV) adopts a C3H1-type zinc-finger fold. Residues 313 to 396 (SLETLEMEIT…GQHSVVLAED (84 aa)) enclose the HTH OST-type domain. One can recognise an RRM domain in the interval 422–497 (HQIYLTFPAE…SRVLVKPYRE (76 aa)). A coiled-coil region spans residues 537–565 (RLMRKQLAEKREMLLEMERRRATVRRLES). The segment at 598–623 (PSLASPDPLEIVSNSQAPPTQAGNIY) is disordered. The span at 609-620 (VSNSQAPPTQAG) shows a compositional bias: polar residues.

This is Zinc finger CCCH domain-containing protein 54 from Oryza sativa subsp. japonica (Rice).